The primary structure comprises 508 residues: General transcription factor IIF subunit 1 (508 aa).

At Ala-2 the chain carries N-acetylalanine. Thr-156 is subject to Phosphothreonine. Positions 177 to 446 are disordered; sequence MQQRRLKDQD…TPSSGDVQVT (270 aa). Phosphoserine occurs at positions 217, 218, 221, and 224. Over residues 232 to 251 the composition is skewed to basic residues; sequence SKAKKKAPVTKAGRKKKKKK. Acidic residues-rich tracts occupy residues 255-270 and 303-325; these read DEAF…EGQE and EQSE…EEEE. Thr-331 is modified (phosphothreonine). Over residues 343–355 the composition is skewed to acidic residues; the sequence is DDSDSSEESDIDS. The segment covering 364–374 has biased composition (basic residues); that stretch reads AKKKTPPKRER. Phosphoserine occurs at positions 377, 380, 381, and 385. Polar residues predominate over residues 378 to 388; sequence GGSSKGTSRPG. A Phosphothreonine modification is found at Thr-389. Over residues 389 to 406 the composition is skewed to low complexity; it reads TPSAEAASTSSTLRAAAS. Position 391 is a phosphoserine (Ser-391). Lys-407 bears the N6-acetyllysine mark. Positions 428–443 are enriched in polar residues; the sequence is GPQSLSGKSTPSSGDV. Phosphoserine occurs at positions 431, 433, and 436. Thr-437 is subject to Phosphothreonine. Phosphoserine is present on Ser-440.

It belongs to the TFIIF alpha subunit family. Heterodimer of an alpha and a beta subunit. Interacts with GTF2F2, CTDP1, TAF6/TAFII80 and URI1. Interacts with GTF2B (via C-terminus and preferentially via acetylated form); this interaction prevents binding of GTF2B to GTF2F2. Part of TBP-based Pol II pre-initiation complex (PIC), in which Pol II core assembles with general transcription factors and other specific initiation factors including GTF2E1, GTF2E2, GTF2F1, GTF2F2, TCEA1, ERCC2, ERCC3, GTF2H2, GTF2H3, GTF2H4, GTF2H5, GTF2A1, GTF2A2, GTF2B and TBP; this large multi-subunit PIC complex mediates DNA unwinding and targets Pol II core to the transcription start site where the first phosphodiester bond forms. In terms of processing, phosphorylated on Ser and other residues by TAF1 and casein kinase II-like kinases.

Its subcellular location is the nucleus. In terms of biological role, TFIIF is a general transcription initiation factor that binds to RNA polymerase II and helps to recruit it to the initiation complex in collaboration with TFIIB. It promotes transcription elongation. This chain is General transcription factor IIF subunit 1 (Gtf2f1), found in Mus musculus (Mouse).